The chain runs to 517 residues: Crotonobetaine/carnitine--CoA ligase (517 aa).

This sequence belongs to the ATP-dependent AMP-binding enzyme family.

It carries out the reaction 4-(trimethylamino)butanoate + ATP + CoA = 4-(trimethylamino)butanoyl-CoA + AMP + diphosphate. The enzyme catalyses crotonobetaine + ATP + CoA = crotonobetainyl-CoA + AMP + diphosphate. It catalyses the reaction (R)-carnitine + ATP + CoA = (R)-carnitinyl-CoA + AMP + diphosphate. The protein operates within amine and polyamine metabolism; carnitine metabolism. In terms of biological role, catalyzes the transfer of CoA to carnitine, generating the initial carnitinyl-CoA needed for the CaiB reaction cycle. Also has activity toward crotonobetaine and gamma-butyrobetaine. The polypeptide is Crotonobetaine/carnitine--CoA ligase (Escherichia coli O139:H28 (strain E24377A / ETEC)).